Here is a 605-residue protein sequence, read N- to C-terminus: Poly [ADP-ribose] polymerase 2-B (605 aa).

A disordered region spans residues 96–122 (NAAAAAAVTDGGDQDKTKSAKDDDGDD). Residues 108–122 (DQDKTKSAKDDDGDD) are compositionally biased toward basic and acidic residues. The 108-residue stretch at 153 to 260 (AYHVLQVGDE…TKLETRTASF (108 aa)) folds into the WGR domain. Positions 250–370 (ETKLETRTAS…EIEIAIKLLE (121 aa)) constitute a PARP alpha-helical domain. Residues 378–605 (HPLYARYKQF…NVNFNFKRWG (228 aa)) form the PARP catalytic domain.

The protein belongs to the ARTD/PARP family.

The protein localises to the nucleus. The enzyme catalyses NAD(+) + (ADP-D-ribosyl)n-acceptor = nicotinamide + (ADP-D-ribosyl)n+1-acceptor + H(+).. The catalysed reaction is L-aspartyl-[protein] + NAD(+) = 4-O-(ADP-D-ribosyl)-L-aspartyl-[protein] + nicotinamide. It carries out the reaction L-glutamyl-[protein] + NAD(+) = 5-O-(ADP-D-ribosyl)-L-glutamyl-[protein] + nicotinamide. Involved in the base excision repair (BER) pathway, by catalyzing the poly(ADP-ribosyl)ation of a limited number of acceptor proteins involved in chromatin architecture and in DNA metabolism. This modification follows DNA damages and appears as an obligatory step in a detection/signaling pathway leading to the reparation of DNA strand breaks. The protein is Poly [ADP-ribose] polymerase 2-B (PARP2-B) of Oryza sativa subsp. japonica (Rice).